Consider the following 724-residue polypeptide: Tripartite terminase subunit 1 (724 aa).

The C3H1-type zinc finger occupies 175-203 (CAVCFEELCVTANQGEATHRRLLGCVCDH). The tract at residues 410–445 (GGDDADADGGAAGGADAGDGGVGDEDGPGAPPPADA) is disordered. Residues 419 to 430 (GAAGGADAGDGG) are compositionally biased toward gly residues. 652–659 (FRSVFHCG) contributes to the ATP binding site.

The protein belongs to the herpesviridae TRM1 protein family. As to quaternary structure, associates with TRM2 and TRM3 to form the tripartite terminase complex. Interacts with portal protein.

Its subcellular location is the host nucleus. Component of the molecular motor that translocates viral genomic DNA in empty capsid during DNA packaging. Forms a tripartite terminase complex together with TRM2 and TRM3 in the host cytoplasm. Once the complex reaches the host nucleus, it interacts with the capsid portal vertex. This portal forms a ring in which genomic DNA is translocated into the capsid. TRM1 carries an endonuclease activity that plays an important role for the cleavage of concatemeric viral DNA into unit length genomes. This Suid herpesvirus 1 (strain Indiana-Funkhauser / Becker) (SuHV-1) protein is Tripartite terminase subunit 1.